The chain runs to 109 residues: Staphostatin B (109 aa).

Positions 97–101 (IGTSR) are binds to staphopain B.

It belongs to the protease inhibitor I57 (SspC) family. In terms of assembly, forms a stable non-covalent complex with prematurely activated/folded SspB.

The protein localises to the cytoplasm. Functionally, specifically inhibits the cysteine protease staphopain B (SspB) by blocking the active site of the enzyme. Probably required to protect cytoplasmic proteins from being degraded by prematurely activated/folded prostaphopain B. Also involved in growth capacity, viability and bacterial morphology. This chain is Staphostatin B (sspC), found in Staphylococcus aureus (strain Mu50 / ATCC 700699).